The primary structure comprises 580 residues: Arginine--tRNA ligase (580 aa).

Residues 131-141 carry the 'HIGH' region motif; the sequence is ANPTGPMHVGH.

The protein belongs to the class-I aminoacyl-tRNA synthetase family. Monomer.

The protein resides in the cytoplasm. It catalyses the reaction tRNA(Arg) + L-arginine + ATP = L-arginyl-tRNA(Arg) + AMP + diphosphate. The sequence is that of Arginine--tRNA ligase from Cereibacter sphaeroides (strain KD131 / KCTC 12085) (Rhodobacter sphaeroides).